The chain runs to 301 residues: Polynucleotide kinase (301 aa).

In terms of assembly, homotetramer. Requires Mg(2+) as cofactor.

The enzyme catalyses a 5'-end dephospho-2'-deoxyribonucleoside-DNA + ATP = a 5'-end 5'-phospho-2'-deoxyribonucleoside-DNA + ADP + H(+). It carries out the reaction a 2'-deoxyribonucleoside 3'-phosphate + H2O = a 2'-deoxyribonucleoside + phosphate. Its function is as follows. Acts as a 5'-hydroxyl kinase, a 3'-phosphatase and a 2',3'-cyclic phosphodiesterase. Catalyzes the transfer of the terminal phosphate of ATP to the 5'-hydroxyl termini of ribo- and deoxyribonucleotides. In the presence of ADP the enzyme also catalyzes an exchange reaction. In the exchange reaction, an excess ADP causes the enzyme to transfer the 5' terminal phosphate from phosphorylated DNA to ADP. Involved in countering a host defense mechanism which activates T4-induced anticodon nuclease and shuts off viral translation. The polynucleotide kinase modifies the ends of nicked tRNA generated by the antiviral response of the host bacteria and facilitates repair by T4 RNA ligase. This chain is Polynucleotide kinase (pseT), found in Escherichia coli (Bacteriophage T4).